Consider the following 208-residue polypeptide: High frequency lysogenization protein HflD homolog (208 aa).

This sequence belongs to the HflD family.

The protein resides in the cytoplasm. It is found in the cell inner membrane. The sequence is that of High frequency lysogenization protein HflD homolog from Pseudomonas entomophila (strain L48).